The following is a 551-amino-acid chain: Tetrachloroethene reductive dehalogenase (551 aa).

A signal peptide (tat-type signal) is located at residues 1 to 39 (MGEINRRNFLKASMLGAAAAAVASASAVKGMVSPLVADA). One can recognise a 4Fe-4S ferredoxin-type 1 domain in the interval 411–440 (PRKFGVREFCRLCKKCADACPAQAISHEKD). [4Fe-4S] cluster-binding residues include Cys420, Cys423, Cys426, Cys430, Cys467, Cys478, Cys481, and Cys485. Positions 478–496 (CANCVAVCSWNKVETWNHD) constitute a 4Fe-4S ferredoxin-type 2 domain.

It belongs to the PceA family. In terms of assembly, monomer. The cofactor is [4Fe-4S] cluster. It depends on corrinoid as a cofactor. In terms of processing, predicted to be exported by the Tat system. The position of the signal peptide cleavage has been experimentally proven.

The protein resides in the cell membrane. The enzyme catalyses trichloroethene + chloride + A + H(+) = tetrachloroethene + AH2. The catalysed reaction is trichloroethene + AH2 = (Z)-1,2-dichloroethene + chloride + A + H(+). Activity is inhibited by ammonium ions. Photoreversibly inactivated by 1-iodopropane. Catalyzes the reductive dechlorination of tetrachloroethene (PCE) to trichloroethene (TCE) and of trichloroethene to cis-1,2-dichloroethene (DCE). Can also use trichlorofluoroethene, tetrachloromethane, hexachloroethane, tetrachloroethane, trichloroethane and 1,1,1-trichloro-2,2,2-trifluoroethane. Menaquinone can act as the electron donor. Reduced methyl viologen can act as the artificial electron donor. This Dehalobacter restrictus (strain DSM 9455 / PER-K23) protein is Tetrachloroethene reductive dehalogenase.